A 629-amino-acid polypeptide reads, in one-letter code: tRNA uridine 5-carboxymethylaminomethyl modification enzyme MnmG (629 aa).

Residues 15-20 (GAGHAG), Val-127, and Ser-182 each bind FAD. Residues 203 to 226 (TPPRVKSSTIDYSKTEEQPGDDHP) are disordered. Residues 215–226 (SKTEEQPGDDHP) show a composition bias toward basic and acidic residues. 274 to 288 (GARYCPSIEDKIVRF) provides a ligand contact to NAD(+). FAD is bound at residue Gln-371.

It belongs to the MnmG family. Homodimer. Heterotetramer of two MnmE and two MnmG subunits. FAD serves as cofactor.

Its subcellular location is the cytoplasm. Functionally, NAD-binding protein involved in the addition of a carboxymethylaminomethyl (cmnm) group at the wobble position (U34) of certain tRNAs, forming tRNA-cmnm(5)s(2)U34. This chain is tRNA uridine 5-carboxymethylaminomethyl modification enzyme MnmG, found in Listeria monocytogenes serovar 1/2a (strain ATCC BAA-679 / EGD-e).